Consider the following 595-residue polypeptide: Proline--tRNA ligase (595 aa).

It belongs to the class-II aminoacyl-tRNA synthetase family. ProS type 1 subfamily. In terms of assembly, homodimer.

The protein resides in the cytoplasm. The catalysed reaction is tRNA(Pro) + L-proline + ATP = L-prolyl-tRNA(Pro) + AMP + diphosphate. In terms of biological role, catalyzes the attachment of proline to tRNA(Pro) in a two-step reaction: proline is first activated by ATP to form Pro-AMP and then transferred to the acceptor end of tRNA(Pro). As ProRS can inadvertently accommodate and process non-cognate amino acids such as alanine and cysteine, to avoid such errors it has two additional distinct editing activities against alanine. One activity is designated as 'pretransfer' editing and involves the tRNA(Pro)-independent hydrolysis of activated Ala-AMP. The other activity is designated 'posttransfer' editing and involves deacylation of mischarged Ala-tRNA(Pro). The misacylated Cys-tRNA(Pro) is not edited by ProRS. This chain is Proline--tRNA ligase, found in Treponema denticola (strain ATCC 35405 / DSM 14222 / CIP 103919 / JCM 8153 / KCTC 15104).